Consider the following 246-residue polypeptide: Myelin protein P0 (246 aa).

A signal peptide spans 1-27 (MFRDLKPAYLFCCSVLYAFSVLRPSQG). Residues 28–143 (ISVSTHHNLH…VGTSSDVHLT (116 aa)) form the Ig-like V-type domain. The Extracellular segment spans residues 28–150 (ISVSTHHNLH…HLTVYDKIPP (123 aa)). Residues Cys48 and Cys125 are joined by a disulfide bond. N-linked (GlcNAc...) (complex) asparagine glycosylation occurs at Asn120. Residues 151–178 (VGAGVVSGAIIGTFLGIILLIVGGLYLF) form a helical membrane-spanning segment. Topologically, residues 179–246 (RYIVRRRARS…KLSESKRDKK (68 aa)) are cytoplasmic. Residues 200–246 (AERGKVSGKAGTVSKGPVLYATLDQSKSGKGASEKKSKLSESKRDKK) form a disordered region. Over residues 231–246 (ASEKKSKLSESKRDKK) the composition is skewed to basic and acidic residues.

Belongs to the myelin P0 protein family. N-glycan is sulfated. In terms of tissue distribution, found only in peripheral nervous system Schwann cells.

The protein localises to the cell membrane. Its function is as follows. Creation of an extracellular membrane face which guides the wrapping process and ultimately compacts adjacent lamellae. The chain is Myelin protein P0 (mpz) from Heterodontus francisci (Horn shark).